The following is an 843-amino-acid chain: Phosphatidylinositol-glycan-specific phospholipase D (843 aa).

The first 23 residues, 1 to 23 (MSVGRLWSGLLLLLLFFCSRSSS), serve as a signal peptide directing secretion. N94, N271, N292, N308, and N322 each carry an N-linked (GlcNAc...) asparagine glycan. FG-GAP repeat units lie at residues 368 to 429 (SPSA…GLPP), 435 to 498 (DKEA…GRLS), 500 to 560 (SPNI…RNDK), 564 to 625 (TLDE…SLGR), 635 to 695 (QREI…GATR), 707 to 773 (ALFS…TLGD), and 791 to 843 (QYVL…FSSD). N-linked (GlcNAc...) asparagine glycosylation is found at N483, N502, N592, N605, and N661.

This sequence belongs to the GPLD1 family. In terms of assembly, monomer. Post-translationally, glycosylated.

It localises to the secreted. It catalyses the reaction a 6-(alpha-D-glucosaminyl)-1-(1,2-diacyl-sn-glycero-3-phospho)-1D-myo-inositol + H2O = 6-(alpha-D-glucosaminyl)-1D-myo-inositol + a 1,2-diacyl-sn-glycero-3-phosphate + H(+). Its function is as follows. This protein hydrolyzes the inositol phosphate linkage in proteins anchored by phosphatidylinositol glycans (GPI-anchor) thus releasing these proteins from the membrane. This is Phosphatidylinositol-glycan-specific phospholipase D (Gpld1) from Rattus norvegicus (Rat).